Reading from the N-terminus, the 367-residue chain is Queuine tRNA-ribosyltransferase (367 aa).

Asp92 (proton acceptor) is an active-site residue. Substrate-binding positions include 92–96 (DSGGF), Asp146, Gln188, and Gly215. Positions 246–252 (GVGTPKD) are RNA binding. Asp265 acts as the Nucleophile in catalysis. The Zn(2+) site is built by Cys303, Cys305, Cys308, and His334.

It belongs to the queuine tRNA-ribosyltransferase family. Homodimer. Within each dimer, one monomer is responsible for RNA recognition and catalysis, while the other monomer binds to the replacement base PreQ1. Requires Zn(2+) as cofactor.

The enzyme catalyses 7-aminomethyl-7-carbaguanine + guanosine(34) in tRNA = 7-aminomethyl-7-carbaguanosine(34) in tRNA + guanine. It participates in tRNA modification; tRNA-queuosine biosynthesis. Catalyzes the base-exchange of a guanine (G) residue with the queuine precursor 7-aminomethyl-7-deazaguanine (PreQ1) at position 34 (anticodon wobble position) in tRNAs with GU(N) anticodons (tRNA-Asp, -Asn, -His and -Tyr). Catalysis occurs through a double-displacement mechanism. The nucleophile active site attacks the C1' of nucleotide 34 to detach the guanine base from the RNA, forming a covalent enzyme-RNA intermediate. The proton acceptor active site deprotonates the incoming PreQ1, allowing a nucleophilic attack on the C1' of the ribose to form the product. After dissociation, two additional enzymatic reactions on the tRNA convert PreQ1 to queuine (Q), resulting in the hypermodified nucleoside queuosine (7-(((4,5-cis-dihydroxy-2-cyclopenten-1-yl)amino)methyl)-7-deazaguanosine). The polypeptide is Queuine tRNA-ribosyltransferase (Francisella tularensis subsp. holarctica (strain FTNF002-00 / FTA)).